Consider the following 67-residue polypeptide: Conotoxin AbVIM (67 aa).

The first 17 residues, 1–17 (VLIIAVLFLTACQLIAT), serve as a signal peptide directing secretion. The propeptide occupies 18–40 (ASYARSERKHPDLRLSSRNSKLS). Cystine bridges form between Cys43-Cys57, Cys50-Cys61, and Cys56-Cys66.

This sequence belongs to the conotoxin O1 superfamily. In terms of tissue distribution, expressed by the venom duct.

It is found in the secreted. In Conus abbreviatus (Abbreviated cone), this protein is Conotoxin AbVIM.